Here is a 681-residue protein sequence, read N- to C-terminus: Threonine--tRNA ligase (681 aa).

Residues 3–97 form the TGS domain; it reads KQIQVTLPDG…EEDVQLALLT (95 aa). A catalytic region spans residues 279 to 576; it reads DHRVLGKQLD…LIEHYAGAFP (298 aa). 3 residues coordinate Zn(2+): cysteine 372, histidine 423, and histidine 553.

This sequence belongs to the class-II aminoacyl-tRNA synthetase family. In terms of assembly, homodimer. Zn(2+) serves as cofactor.

The protein resides in the cytoplasm. The enzyme catalyses tRNA(Thr) + L-threonine + ATP = L-threonyl-tRNA(Thr) + AMP + diphosphate + H(+). Its function is as follows. Catalyzes the attachment of threonine to tRNA(Thr) in a two-step reaction: L-threonine is first activated by ATP to form Thr-AMP and then transferred to the acceptor end of tRNA(Thr). Also edits incorrectly charged L-seryl-tRNA(Thr). This chain is Threonine--tRNA ligase, found in Acidobacterium capsulatum (strain ATCC 51196 / DSM 11244 / BCRC 80197 / JCM 7670 / NBRC 15755 / NCIMB 13165 / 161).